A 1469-amino-acid polypeptide reads, in one-letter code: ATP-binding cassette transporter abc4 (1469 aa).

The next 8 membrane-spanning stretches (helical) occupy residues 21-40 (SLYY…FPTH), 55-74 (YSLE…RWIT), 94-114 (HGIL…FMFV), 121-141 (AFSD…LFLL), 160-180 (VLLN…PFFF), 189-209 (YSPF…IPLF), 296-316 (ILGM…SPIA), and 337-357 (WIVL…FYLF). Residues 296–580 (ILGMGVSSFM…IAYLMRQIVQ (285 aa)) form the ABC transmembrane type-1 1 domain. A glycan (N-linked (GlcNAc...) asparagine) is linked at asparagine 386. 2 consecutive transmembrane segments (helical) span residues 412–432 (EFIH…YLLQ) and 441–461 (VGLA…PLVA). The N-linked (GlcNAc...) asparagine glycan is linked to asparagine 510. Helical transmembrane passes span 524-544 (VLVE…FTTI) and 553-573 (IAFT…WIAY). Residues 611 to 840 (IGFFNASLTW…LAEQAASASE (230 aa)) form the ABC transporter 1 domain. Residue asparagine 615 is glycosylated (N-linked (GlcNAc...) asparagine). 648 to 655 (GPTGSGKS) lines the ATP pocket. N-linked (GlcNAc...) asparagine glycans are attached at residues asparagine 691, asparagine 790, and asparagine 815. A helical transmembrane segment spans residues 894–914 (GFYVAAVLLFFVTTQATSILI). The region spanning 897–1176 (VAAVLLFFVT…FVRSCNSLQA (280 aa)) is the ABC transmembrane type-1 2 domain. N-linked (GlcNAc...) asparagine glycosylation is present at asparagine 923. The chain crosses the membrane as a helical span at residues 936-956 (FLFVYGTMLLAYSLLDFLRTV). An N-linked (GlcNAc...) asparagine glycan is attached at asparagine 1007. Helical transmembrane passes span 1009 to 1029 (SGWL…ILSV), 1033 to 1053 (MPIF…FGLL), 1065 to 1085 (ISIY…GVSV), 1120 to 1140 (VAVR…LIAL), and 1148 to 1168 (GVVG…LLFV). The 240-residue stretch at 1214–1453 (FNHVSVSYSA…NGHFRRMCDG (240 aa)) folds into the ABC transporter 2 domain. 1246–1253 (GRTGSGKS) contributes to the ATP binding site. Asparagine 1355 carries N-linked (GlcNAc...) asparagine glycosylation.

This sequence belongs to the ABC transporter superfamily. ABCC family. Conjugate transporter (TC 3.A.1.208) subfamily.

Its subcellular location is the vacuole membrane. It catalyses the reaction ATP + H2O + xenobioticSide 1 = ADP + phosphate + xenobioticSide 2.. Involved in detoxification of xenobiotics, and vacuolar sequestration of glutathione S-conjugates. Together with abc2, required for accumulation of a red pigment (ade pigment) in the vacuole of a mutant affected in the adenine biosynthetic pathway. The sequence is that of ATP-binding cassette transporter abc4 from Schizosaccharomyces pombe (strain 972 / ATCC 24843) (Fission yeast).